A 273-amino-acid chain; its full sequence is tRNA pseudouridine synthase B (273 aa).

Aspartate 38 (nucleophile) is an active-site residue.

Belongs to the pseudouridine synthase TruB family. Type 1 subfamily.

The enzyme catalyses uridine(55) in tRNA = pseudouridine(55) in tRNA. Responsible for synthesis of pseudouridine from uracil-55 in the psi GC loop of transfer RNAs. This is tRNA pseudouridine synthase B from Campylobacter curvus (strain 525.92).